A 126-amino-acid polypeptide reads, in one-letter code: Aspartate 1-decarboxylase (126 aa).

The Schiff-base intermediate with substrate; via pyruvic acid role is filled by S25. Pyruvic acid (Ser) is present on S25. T57 provides a ligand contact to substrate. Y58 acts as the Proton donor in catalysis. 73-75 is a binding site for substrate; sequence GAA.

This sequence belongs to the PanD family. In terms of assembly, heterooctamer of four alpha and four beta subunits. It depends on pyruvate as a cofactor. Is synthesized initially as an inactive proenzyme, which is activated by self-cleavage at a specific serine bond to produce a beta-subunit with a hydroxyl group at its C-terminus and an alpha-subunit with a pyruvoyl group at its N-terminus.

Its subcellular location is the cytoplasm. It carries out the reaction L-aspartate + H(+) = beta-alanine + CO2. It functions in the pathway cofactor biosynthesis; (R)-pantothenate biosynthesis; beta-alanine from L-aspartate: step 1/1. Its function is as follows. Catalyzes the pyruvoyl-dependent decarboxylation of aspartate to produce beta-alanine. In Proteus mirabilis (strain HI4320), this protein is Aspartate 1-decarboxylase.